The following is a 551-amino-acid chain: Monocarboxylic acid transporter (551 aa).

The next 13 membrane-spanning stretches (helical) occupy residues 18–38 (NPIL…TVVL), 63–83 (GLAI…VGAI), 90–110 (GFLY…LVAE), 144–164 (VTLF…SVLL), 171–191 (WQAV…LLGG), 203–223 (AVLL…KVSG), 267–287 (LDFI…PHVL), 307–327 (IVLI…AAAL), 355–375 (IFMA…VAGL), 411–431 (VVIG…NVAF), 432–452 (LVAL…LYSL), 463–483 (VAAI…SPAV), and 503–523 (NPGL…TLVG).

This sequence belongs to the sodium:solute symporter (SSF) (TC 2.A.21) family.

The protein localises to the cell membrane. Functionally, acts as a secondary carrier for acetate, propionate and pyruvate. Has high affinity for acetate and propionate and lower affinity for pyruvate. Driven by the electrochemical proton potential. The polypeptide is Monocarboxylic acid transporter (Corynebacterium glutamicum (strain ATCC 13032 / DSM 20300 / JCM 1318 / BCRC 11384 / CCUG 27702 / LMG 3730 / NBRC 12168 / NCIMB 10025 / NRRL B-2784 / 534)).